Reading from the N-terminus, the 363-residue chain is Probable matrix metalloproteinase 095L (363 aa).

The first 25 residues, 1-25 (MSVDSFTSRLAVVMTAVVLVWWAQA), serve as a signal peptide directing secretion. A propeptide spans 26 to 126 (LPVPSPRRGE…PRCGVPDVSK (101 aa)) (activation peptide). Positions 117–124 (PRCGVPDV) match the Cysteine switch motif. Zn(2+) contacts are provided by C119 and H275. E276 is a catalytic residue. 2 residues coordinate Zn(2+): H279 and H285.

Belongs to the peptidase M10A family. It depends on Zn(2+) as a cofactor.

It localises to the secreted. Probable endopeptidase. The polypeptide is Probable matrix metalloproteinase 095L (Aedes vexans (Inland floodwater mosquito)).